We begin with the raw amino-acid sequence, 714 residues long: Protein HAPLESS 2-B (714 aa).

The first 33 residues, Met1–Gly33, serve as a signal peptide directing secretion. Topologically, residues Val34–Arg552 are extracellular. Intrachain disulfides connect Cys45–Cys59, Cys134–Cys164, Cys146–Cys194, Cys165–Cys321, Cys167–Cys177, Cys304–Cys328, and Cys441–Cys479. A helical membrane pass occupies residues Cys553–Leu573. Residues His574–His714 are Cytoplasmic-facing. Positions Arg597–Arg619 are disordered. The span at Ala598–Arg619 shows a compositional bias: basic residues.

The protein belongs to the HAP2/GCS1 family.

It is found in the endoplasmic reticulum membrane. It localises to the cell membrane. Functionally, required for male fertility. Plays a role in pollen tube guidance and successful gamete attachment. Essential for the fusion of gametes during double fertilization, where one male gamete fuses with the egg to produce a zygote, and another male gamete fuses with the central cell to produce the endosperm. Mediates the fusion of cell membranes. Not required for pollen tube outgrowth. This chain is Protein HAPLESS 2-B (HAP2B), found in Oryza sativa subsp. japonica (Rice).